The primary structure comprises 170 residues: Lipocalin Cav p 2.0101 (170 aa).

A signal peptide spans 1–16 (MMQILLLALAVSLACA). Cystine bridges form between cysteine 56-cysteine 60 and cysteine 75-cysteine 168.

The protein belongs to the calycin superfamily. Lipocalin family. Post-translationally, not N-linked glycosylated. In terms of tissue distribution, expressed in harderian gland (at protein level). Expressed in hair (at protein level). Expressed in submaxillary gland and harderian gland.

The protein localises to the secreted. In Cavia porcellus (Guinea pig), this protein is Lipocalin Cav p 2.0101 (Lcncavp2).